Consider the following 417-residue polypeptide: RH-like protein (417 aa).

11 helical membrane-spanning segments follow: residues 12 to 32 (CLPLWALTLEAALILLFFFFT), 44 to 64 (LVASYQVCQDLTVMAVLGLGF), 77 to 97 (VAFNLFLLALGVQWAILLDGF), 125 to 145 (ISMNAVLGKVNLAQLVVMELV), 172 to 192 (IHVFAAYFGLTVAWCLPKPLP), 203 to 223 (TSPSLFAMLGTLFLWMFWPTF), 238 to 258 (VFSTYYALAVSAVTAISVSSL), 265 to 285 (INMTYMPNAGLAGGVAVGASC), 287 to 307 (VIHSPWIAMVLGLVAGLISFG), 331 to 351 (TFGLPALLGEITYIVLMALRV), and 358 to 378 (MIGFQVLLSTGTLSLAMAMSI).

It belongs to the ammonium transporter (TC 2.A.49) family. Rh subfamily.

It localises to the membrane. May be part of an oligomeric complex which is likely to have a transport or channel function in the erythrocyte membrane. The polypeptide is RH-like protein (Macaca fascicularis (Crab-eating macaque)).